The following is a 377-amino-acid chain: MAKRDYYEVLGISKSASADEIKKAYRKLSKQYHPDINKEAGADEKFKEISEAYEALSDPQKRAQYDQYGHVDPNQGFGGGGAGGGFGGGGFSGFEDIFDTFFGGGGRQQDPNAPRQGSDLQYTMRLKFKEAIFGKDAEIEIPREENCDTCHGSGAKPGTTPEKCSHCGGKGSINVEQNTPFGRVVNKRTCQYCNGTGKEIKEKCPTCHGKGRVTKTKKIKVKVPAGVNDGQQMRVSGEGEAGINGGPNGDLYVVFVVIPDEFFEREADDIYVEVPITFVQATLGDEIDVPTVHGKVRLKIPSGTQTGTTFRLRGKGVPHLRGNGTGDQHVIVKVIVPKKLDDKQKEILREFASTTGDKVDEQTSGFFDKMKRAFKGD.

The region spanning 5-69 is the J domain; sequence DYYEVLGISK…QKRAQYDQYG (65 aa). The CR-type zinc-finger motif lies at 134-216; sequence GKDAEIEIPR…CHGKGRVTKT (83 aa). The Zn(2+) site is built by cysteine 147, cysteine 150, cysteine 164, cysteine 167, cysteine 190, cysteine 193, cysteine 204, and cysteine 207. 4 CXXCXGXG motif repeats span residues 147–154, 164–171, 190–197, and 204–211; these read CDTCHGSG, CSHCGGKG, CQYCNGTG, and CPTCHGKG.

This sequence belongs to the DnaJ family. As to quaternary structure, homodimer. Zn(2+) serves as cofactor.

It is found in the cytoplasm. Functionally, participates actively in the response to hyperosmotic and heat shock by preventing the aggregation of stress-denatured proteins and by disaggregating proteins, also in an autonomous, DnaK-independent fashion. Unfolded proteins bind initially to DnaJ; upon interaction with the DnaJ-bound protein, DnaK hydrolyzes its bound ATP, resulting in the formation of a stable complex. GrpE releases ADP from DnaK; ATP binding to DnaK triggers the release of the substrate protein, thus completing the reaction cycle. Several rounds of ATP-dependent interactions between DnaJ, DnaK and GrpE are required for fully efficient folding. Also involved, together with DnaK and GrpE, in the DNA replication of plasmids through activation of initiation proteins. In Listeria monocytogenes serotype 1/2a (strain 10403S), this protein is Chaperone protein DnaJ.